A 473-amino-acid polypeptide reads, in one-letter code: Crt homolog 1 (473 aa).

At 1–49 the chain is on the cytoplasmic side; it reads MTNNDKEKQPLLSSINNEDDNGATINIVEPVPWYSNIPQKIKNSMSKET. A helical membrane pass occupies residues 50–70; that stretch reads ITILIYVVLYVTSGVINSVLL. The Vacuolar segment spans residues 71–80; the sequence is KKVMNKFTNY. A helical membrane pass occupies residues 81–101; sequence AFFLSQLTNFGYVPIFGAVTA. Residues 102–121 are Cytoplasmic-facing; sequence YKIFFTKDIPQETRDFPTRK. A helical transmembrane segment spans residues 122–142; it reads FAIMGALDAITGFFVVIGGVS. Residues 143 to 146 lie on the Vacuolar side of the membrane; it reads TSGP. The helical transmembrane segment at 147–167 threads the bilayer; the sequence is LQQLLNQAIIPFTMIASFIFL. Residues 168–175 are Cytoplasmic-facing; the sequence is KERYSLIQ. Residues 176 to 196 form a helical membrane-spanning segment; sequence LGGALVIIGGVVTSLIPSLLG. At 197-207 the chain is on the vacuolar side; sequence GSSGGNKPFWN. The chain crosses the membrane as a helical span at residues 208 to 228; that stretch reads FFYLLSVIPGALSNVYKDIGF. At 229–248 the chain is on the cytoplasmic side; the sequence is QAVADMDVWYLQYWDSLYQS. A helical membrane pass occupies residues 249–269; sequence IFGLFLFPVNNWLPPPATVKF. Over 270 to 322 the chain is Vacuolar; sequence EQILPFMKEGAECLAGINSIIPSYINGTSSFTATSCTYAPDATITCDDCHNAW. An N-linked (GlcNAc...) asparagine glycan is attached at Asn-295. A helical membrane pass occupies residues 323-343; the sequence is IVIILYMTINIIYNIFILLVL. Over 344 to 352 the chain is Cytoplasmic; it reads KHAGATVYS. A helical membrane pass occupies residues 353–373; sequence IANTLRLPLTNIVFSIHFIMG. Ser-374 is a topological domain (vacuolar). Residues 375 to 395 form a helical membrane-spanning segment; the sequence is AVSPFSGLSVAGLVIILVGLG. At 396–473 the chain is on the cytoplasmic side; the sequence is GYRVGSMIKQ…AANNNNYGDA (78 aa).

The protein belongs to the CRT-like transporter family.

The protein localises to the vacuole membrane. Nutrient transporter. Involved in maintaining the osmotic homeostasis of the digestive vacuole. This chain is Crt homolog 1 (crtp1), found in Dictyostelium discoideum (Social amoeba).